Reading from the N-terminus, the 418-residue chain is Serine hydroxymethyltransferase (418 aa).

Residues L121 and 125–127 contribute to the (6S)-5,6,7,8-tetrahydrofolate site; that span reads GHL. K230 is modified (N6-(pyridoxal phosphate)lysine). 355–357 contacts (6S)-5,6,7,8-tetrahydrofolate; it reads SPF.

The protein belongs to the SHMT family. In terms of assembly, homodimer. Requires pyridoxal 5'-phosphate as cofactor.

The protein resides in the cytoplasm. The catalysed reaction is (6R)-5,10-methylene-5,6,7,8-tetrahydrofolate + glycine + H2O = (6S)-5,6,7,8-tetrahydrofolate + L-serine. The protein operates within one-carbon metabolism; tetrahydrofolate interconversion. It functions in the pathway amino-acid biosynthesis; glycine biosynthesis; glycine from L-serine: step 1/1. Catalyzes the reversible interconversion of serine and glycine with tetrahydrofolate (THF) serving as the one-carbon carrier. This reaction serves as the major source of one-carbon groups required for the biosynthesis of purines, thymidylate, methionine, and other important biomolecules. Also exhibits THF-independent aldolase activity toward beta-hydroxyamino acids, producing glycine and aldehydes, via a retro-aldol mechanism. This is Serine hydroxymethyltransferase from Streptococcus pyogenes serotype M6 (strain ATCC BAA-946 / MGAS10394).